A 203-amino-acid chain; its full sequence is Gramillins biosynthetic cluster protein FGSG_00038 (203 aa).

It participates in mycotoxin biosynthesis. Its function is as follows. Part of the gene cluster that mediates the biosynthesis of gramillins A and B, bicyclic lipopeptides that induce cell death in maize leaves but not in wheat leaves. The nonribosomal peptide synthetase GRA1 incorporates respectively a glutamic adic (Glu), a leucine (Leu), a serine (Ser), a hydroxyglutamine (HOGln), a 2-amino decanoic acid, and 2 cysteins (CysB and CysA). The biosynthesis of 2-amino decanoic acid incorporated in gramillins could be initiated by a fatty acid synthase composed of the alpha and beta subunits FGSG_00036 and FGSG_11656. The cytochrome P450 monooxygenase FGSG_15680 could hydroxylate the fatty acid chain. Subsequent oxidation to the ketone by the oxidoreductase FGSG_00048 and transamination by aminotransferase FGSG_00049 could form 2-amino-decanoic acid. On the other hand, FGSG_15680 could also be responsible for the HO-modified glutamine at the gamma-position. Whether hydroxylation occurs on the fully assembled product or on the Gln residue prior to assembly into the gramillins requires further proof. The thioredoxin FGSG_00043 could also be required for the disulfide-bond formation between CysA and CysB. The specific involvement of the remaining proteins from the cluster is more difficult to discern, but could have broader regulatory (FGSG_00040 and FGSG_11657) or enzymatic functions (FGSG_00044 and FGSG_00045). The final C-domain of GRA1 does not possess the expected sequence of a termination CT domain, often implicated in macrocyclization and release of a cyclopeptidein fungal NRPs; and the thioesterase FGSG_00047 may act in concert with the terminal C-domain of GRA1 to catalyze the formation of the macrocyclic anhydride and release of the products. The protein is Gramillins biosynthetic cluster protein FGSG_00038 of Gibberella zeae (strain ATCC MYA-4620 / CBS 123657 / FGSC 9075 / NRRL 31084 / PH-1) (Wheat head blight fungus).